The following is an 877-amino-acid chain: Putative leucine-rich repeat receptor-like serine/threonine-protein kinase At2g19230 (877 aa).

The N-terminal stretch at 1-24 (MGNFNFLPLVSFASFVVVLVLVCA) is a signal peptide. Topologically, residues 25–517 (QDQSGFVSID…RNKKTERKEY (493 aa)) are extracellular. 6 N-linked (GlcNAc...) asparagine glycosylation sites follow: Asn142, Asn233, Asn261, Asn295, Asn405, and Asn420. 2 LRR repeats span residues 439-462 (PLQK…ANLP) and 463-484 (DLTE…KLLE). A helical membrane pass occupies residues 518 to 538 (IIPSVASVTGLFFLLLALISF). Topologically, residues 539–877 (WQFKKRQQSV…VDPGVLPQPR (339 aa)) are cytoplasmic. The Protein kinase domain maps to 569–842 (NNFERVLGQG…QVVAELKESL (274 aa)). Residues 575 to 583 (LGQGGFGKV) and Lys596 each bind ATP. Tyr641 bears the Phosphotyrosine mark. Asp692 (proton acceptor) is an active-site residue. Phosphoserine is present on Ser726. Residues Thr727 and Thr732 each carry the phosphothreonine modification.

It belongs to the protein kinase superfamily. Ser/Thr protein kinase family.

It is found in the cell membrane. It catalyses the reaction L-seryl-[protein] + ATP = O-phospho-L-seryl-[protein] + ADP + H(+). It carries out the reaction L-threonyl-[protein] + ATP = O-phospho-L-threonyl-[protein] + ADP + H(+). This chain is Putative leucine-rich repeat receptor-like serine/threonine-protein kinase At2g19230, found in Arabidopsis thaliana (Mouse-ear cress).